Reading from the N-terminus, the 156-residue chain is SsrA-binding protein (156 aa).

It belongs to the SmpB family.

Its subcellular location is the cytoplasm. Required for rescue of stalled ribosomes mediated by trans-translation. Binds to transfer-messenger RNA (tmRNA), required for stable association of tmRNA with ribosomes. tmRNA and SmpB together mimic tRNA shape, replacing the anticodon stem-loop with SmpB. tmRNA is encoded by the ssrA gene; the 2 termini fold to resemble tRNA(Ala) and it encodes a 'tag peptide', a short internal open reading frame. During trans-translation Ala-aminoacylated tmRNA acts like a tRNA, entering the A-site of stalled ribosomes, displacing the stalled mRNA. The ribosome then switches to translate the ORF on the tmRNA; the nascent peptide is terminated with the 'tag peptide' encoded by the tmRNA and targeted for degradation. The ribosome is freed to recommence translation, which seems to be the essential function of trans-translation. This Staphylococcus epidermidis (strain ATCC 35984 / DSM 28319 / BCRC 17069 / CCUG 31568 / BM 3577 / RP62A) protein is SsrA-binding protein.